Reading from the N-terminus, the 348-residue chain is Isopentenyl-diphosphate delta-isomerase (348 aa).

Residue 9-10 (RK) coordinates substrate. FMN is bound by residues 68–70 (AMT), S98, and N127. Q157 lines the substrate pocket. E158 is a binding site for Mg(2+). FMN is bound by residues K188, S213, T218, and 286 to 287 (AG).

The protein belongs to the IPP isomerase type 2 family. As to quaternary structure, homooctamer. Dimer of tetramers. Requires FMN as cofactor. NADPH serves as cofactor. The cofactor is Mg(2+).

Its subcellular location is the cytoplasm. The catalysed reaction is isopentenyl diphosphate = dimethylallyl diphosphate. In terms of biological role, involved in the biosynthesis of isoprenoids. Catalyzes the 1,3-allylic rearrangement of the homoallylic substrate isopentenyl (IPP) to its allylic isomer, dimethylallyl diphosphate (DMAPP). The protein is Isopentenyl-diphosphate delta-isomerase of Limosilactobacillus reuteri (strain DSM 20016) (Lactobacillus reuteri).